Reading from the N-terminus, the 1040-residue chain is Alpha-mannosidase 2C1 (1040 aa).

Residues His260, Asp262, Asp372, and His577 each contribute to the Co(2+) site. Asp372 serves as the catalytic Nucleophile.

The protein belongs to the glycosyl hydrolase 38 family. Co(2+) is required as a cofactor.

The protein localises to the cytoplasm. The catalysed reaction is Hydrolysis of terminal, non-reducing alpha-D-mannose residues in alpha-D-mannosides.. Strongly inhibited by swainsonine. Also inhibited to a lesser extent by deoxymannojirimycin (DMM). Its function is as follows. Cleaves alpha 1,2-, alpha 1,3-, and alpha 1,6-linked mannose residues on cytoplasmic free oligosaccharides generated by N-glycoprotein degradation pathways. The chain is Alpha-mannosidase 2C1 (MAN2C1) from Homo sapiens (Human).